The following is a 191-amino-acid chain: Ribosome maturation factor RimM (191 aa).

In terms of domain architecture, PRC barrel spans 99–172; the sequence is TDEFYQIDLI…FLVVDPVAAG (74 aa).

It belongs to the RimM family. As to quaternary structure, binds ribosomal protein uS19.

Its subcellular location is the cytoplasm. An accessory protein needed during the final step in the assembly of 30S ribosomal subunit, possibly for assembly of the head region. Essential for efficient processing of 16S rRNA. May be needed both before and after RbfA during the maturation of 16S rRNA. It has affinity for free ribosomal 30S subunits but not for 70S ribosomes. In Bartonella bacilliformis (strain ATCC 35685 / KC583 / Herrer 020/F12,63), this protein is Ribosome maturation factor RimM.